Reading from the N-terminus, the 123-residue chain is Large-conductance mechanosensitive channel (123 aa).

The next 2 membrane-spanning stretches (helical) occupy residues 14-34 (VLDLAVGVIIGSAFTGLVTSL) and 67-87 (GNFINDVLNFLIIAFVVFLLV).

The protein belongs to the MscL family. Homopentamer.

It localises to the cell membrane. In terms of biological role, channel that opens in response to stretch forces in the membrane lipid bilayer. May participate in the regulation of osmotic pressure changes within the cell. The chain is Large-conductance mechanosensitive channel from Lacticaseibacillus casei (strain BL23) (Lactobacillus casei).